Here is a 250-residue protein sequence, read N- to C-terminus: 2,3-bisphosphoglycerate-dependent phosphoglycerate mutase (250 aa).

Substrate is bound by residues 10 to 17, 23 to 24, Arg-62, 89 to 92, Lys-100, 116 to 117, and 185 to 186; these read RHGESVWN, TG, ERHY, RR, and GN. His-11 acts as the Tele-phosphohistidine intermediate in catalysis. The active-site Proton donor/acceptor is the Glu-89.

The protein belongs to the phosphoglycerate mutase family. BPG-dependent PGAM subfamily. As to quaternary structure, homodimer.

It carries out the reaction (2R)-2-phosphoglycerate = (2R)-3-phosphoglycerate. The protein operates within carbohydrate degradation; glycolysis; pyruvate from D-glyceraldehyde 3-phosphate: step 3/5. Its function is as follows. Catalyzes the interconversion of 2-phosphoglycerate and 3-phosphoglycerate. The chain is 2,3-bisphosphoglycerate-dependent phosphoglycerate mutase from Proteus mirabilis (strain HI4320).